Reading from the N-terminus, the 769-residue chain is PDZ domain-containing protein 4 (769 aa).

Residues 130–214 (EVELYKSSHR…TNISLLVARP (85 aa)) form the PDZ domain. A disordered region spans residues 221-315 (RWKDSDRDDF…TNTPGSLRKF (95 aa)). Positions 229-239 (DFLDDFGSENE) are enriched in acidic residues. Ser-236 is subject to Phosphoserine. Residues 282-298 (RTDESTRNEESSEHDLL) are compositionally biased toward basic and acidic residues. Positions 389–419 (VNRNESLGHEMAMLEEELRHLEFKCRNILRA) form a coiled coil. Positions 445–579 (ASEPKKHELS…RHRGQGQEGE (135 aa)) are disordered. Positions 447–467 (EPKKHELSDISELPEKSDKDS) are enriched in basic and acidic residues. Ser-454 is subject to Phosphoserine. Positions 468–479 (TSAYNTGESCRS) are enriched in polar residues. Basic and acidic residues predominate over residues 530–547 (LSRDPEAGRRQHAEERGR).

Brain-specific. Expressed in fetal and adult brain. Up-regulated in synovial carcinomas.

It is found in the cytoplasm. The protein localises to the cell cortex. The sequence is that of PDZ domain-containing protein 4 (PDZD4) from Homo sapiens (Human).